We begin with the raw amino-acid sequence, 115 residues long: Large ribosomal subunit protein uL18 (115 aa).

The disordered stretch occupies residues 1 to 29; it reads MISKPDKNKLRQKRHTRVRGKISGTSETP. Positions 10–20 are enriched in basic residues; it reads LRQKRHTRVRG.

This sequence belongs to the universal ribosomal protein uL18 family. As to quaternary structure, part of the 50S ribosomal subunit; part of the 5S rRNA/L5/L18/L25 subcomplex. Contacts the 5S and 23S rRNAs.

Its function is as follows. This is one of the proteins that bind and probably mediate the attachment of the 5S RNA into the large ribosomal subunit, where it forms part of the central protuberance. This is Large ribosomal subunit protein uL18 from Lactococcus lactis subsp. lactis (strain IL1403) (Streptococcus lactis).